A 69-amino-acid chain; its full sequence is Guanine nucleotide-binding protein G(I)/G(S)/G(O) subunit gamma-T2 (69 aa).

Residues 47-69 (DPLLKGIPEDKNPFKEKGGCMIS) form a disordered region. Residues 53-69 (IPEDKNPFKEKGGCMIS) show a composition bias toward basic and acidic residues. Cys-66 is subject to Cysteine methyl ester. Residue Cys-66 is the site of S-farnesyl cysteine attachment. Residues 67-69 (MIS) constitute a propeptide, removed in mature form.

It belongs to the G protein gamma family. As to quaternary structure, g proteins are composed of 3 units, alpha, beta and gamma.

It localises to the cell membrane. In terms of biological role, guanine nucleotide-binding proteins (G proteins) are involved as a modulator or transducer in various transmembrane signaling systems. The beta and gamma chains are required for the GTPase activity, for replacement of GDP by GTP, and for G protein-effector interaction. This chain is Guanine nucleotide-binding protein G(I)/G(S)/G(O) subunit gamma-T2 (GNGT2), found in Canis lupus familiaris (Dog).